We begin with the raw amino-acid sequence, 44 residues long: Photosystem I reaction center subunit IX (44 aa).

The chain crosses the membrane as a helical span at residues 7-27; sequence YLSTAPVLTTLWFGSLAGLLI.

This sequence belongs to the PsaJ family.

The protein resides in the plastid. The protein localises to the chloroplast thylakoid membrane. Functionally, may help in the organization of the PsaE and PsaF subunits. This is Photosystem I reaction center subunit IX from Phalaenopsis aphrodite subsp. formosana (Moth orchid).